A 147-amino-acid chain; its full sequence is UPF0178 protein VP2328 (147 aa).

It belongs to the UPF0178 family.

In Vibrio parahaemolyticus serotype O3:K6 (strain RIMD 2210633), this protein is UPF0178 protein VP2328.